The following is an 891-amino-acid chain: Protein translocase subunit SecA 1 (891 aa).

ATP-binding positions include Gln-86, 104-108, and Asp-493; that span reads GEGKT. Residues 845-873 are compositionally biased toward basic and acidic residues; it reads KQVAKPIEASHGDGNRKKAPVVKEKEAGR. The interval 845 to 891 is disordered; the sequence is KQVAKPIEASHGDGNRKKAPVVKEKEAGRNDPCPCGSGKKYKKCCGE. Residues Cys-877, Cys-879, Cys-888, and Cys-889 each coordinate Zn(2+).

This sequence belongs to the SecA family. As to quaternary structure, monomer and homodimer. Part of the essential Sec protein translocation apparatus which comprises SecA, SecYEG and auxiliary proteins SecDF. Other proteins may also be involved. Requires Zn(2+) as cofactor.

The protein resides in the cell membrane. The protein localises to the cytoplasm. It catalyses the reaction ATP + H2O + cellular proteinSide 1 = ADP + phosphate + cellular proteinSide 2.. Functionally, part of the Sec protein translocase complex. Interacts with the SecYEG preprotein conducting channel. Has a central role in coupling the hydrolysis of ATP to the transfer of proteins into and across the cell membrane, serving as an ATP-driven molecular motor driving the stepwise translocation of polypeptide chains across the membrane. In Alkaliphilus metalliredigens (strain QYMF), this protein is Protein translocase subunit SecA 1.